An 86-amino-acid polypeptide reads, in one-letter code: Protein Vpu (86 aa).

The Extracellular segment spans residues 1-12 (MVDLLAKVDYRI). The chain crosses the membrane as a helical span at residues 13–33 (VIVAFIVALIIAIVVWTIAYI). The Cytoplasmic segment spans residues 34–86 (EYRKLLRQRRIDRLIKRTRERAEDSGNESDGDTEELSTMVDMGNLRLLDVNDL). The segment at 52-71 (RERAEDSGNESDGDTEELST) is disordered. 2 positions are modified to phosphoserine; by host CK2: Ser-58 and Ser-62. Positions 58-68 (SGNESDGDTEE) are enriched in acidic residues.

Belongs to the HIV-1 VPU protein family. In terms of assembly, homopentamer. Interacts with host CD4 and BRTC; these interactions induce proteasomal degradation of CD4. Interacts with host BST2; this interaction leads to the degradation of host BST2. Interacts with host FBXW11. Interacts with host AP1M1; this interaction plays a role in the mistrafficking and subsequent degradation of host BST2. Interacts with host RANBP2; this interaction allows Vpu to down-regulate host BLM sumoylation. Post-translationally, phosphorylated by host CK2. This phosphorylation is necessary for interaction with human BTRC and degradation of CD4.

The protein localises to the host membrane. Ion channel activity is inhibited by hexamethylene amiloride in vitro. Its function is as follows. Enhances virion budding by targeting host CD4 and Tetherin/BST2 to proteasome degradation. Degradation of CD4 prevents any unwanted premature interactions between viral Env and its host receptor CD4 in the endoplasmic reticulum. Degradation of antiretroviral protein Tetherin/BST2 is important for virion budding, as BST2 tethers new viral particles to the host cell membrane. Mechanistically, Vpu bridges either CD4 or BST2 to BTRC, a substrate recognition subunit of the Skp1/Cullin/F-box protein E3 ubiquitin ligase, induces their ubiquitination and subsequent proteasomal degradation. The alteration of the E3 ligase specificity by Vpu seems to promote the degradation of host IKBKB, leading to NF-kappa-B down-regulation and subsequent apoptosis. Acts as a viroporin that forms an oligomeric ion channel in membranes. Modulates the host DNA repair mechanisms to promote degradation of nuclear viral cDNA in cells that are already productively infected in order to suppress immune sensing and proviral hyper-integration (superinfection). Manipulates PML-NBs and modulates SUMOylation of host BLM protein thereby enhancing its DNA-end processing activity toward viral unintegrated linear DNA. Also inhibits RAD52-mediated homologous repair of viral cDNA, preventing the generation of dead-end circular forms of single copies of the long terminal repeat and permitting sustained nucleolytic attack. This is Protein Vpu from Homo sapiens (Human).